Here is a 465-residue protein sequence, read N- to C-terminus: uncharacterized protein (465 aa).

The TRAM domain maps to 1 to 50; that stretch reads MEITDLAAEGNALCRIDDMVMFVPFAAPGDRCTVQVVKKKRNFMQGRIVS. [4Fe-4S] cluster is bound by residues cysteine 63, cysteine 69, cysteine 72, and cysteine 168. S-adenosyl-L-methionine-binding residues include glutamine 293, tyrosine 322, glutamate 343, and aspartate 392. Cysteine 419 (nucleophile) is an active-site residue.

This sequence belongs to the class I-like SAM-binding methyltransferase superfamily. RNA M5U methyltransferase family.

This is an uncharacterized protein from Porphyromonas gingivalis (strain ATCC BAA-308 / W83).